A 227-amino-acid polypeptide reads, in one-letter code: Translation initiation factor 6 (227 aa).

Belongs to the eIF-6 family.

Functionally, binds to the 50S ribosomal subunit and prevents its association with the 30S ribosomal subunit to form the 70S initiation complex. The chain is Translation initiation factor 6 from Methanococcus maripaludis (strain DSM 14266 / JCM 13030 / NBRC 101832 / S2 / LL).